Consider the following 275-residue polypeptide: Large ribosomal subunit protein uL2 (275 aa).

The tract at residues 208 to 275 (AGAKRWRGRR…NMIIRDRRKK (68 aa)) is disordered. Basic residues-rich tracts occupy residues 209–219 (GAKRWRGRRPT) and 254–263 (KGYKTRRNKR).

Belongs to the universal ribosomal protein uL2 family. In terms of assembly, part of the 50S ribosomal subunit. Forms a bridge to the 30S subunit in the 70S ribosome.

One of the primary rRNA binding proteins. Required for association of the 30S and 50S subunits to form the 70S ribosome, for tRNA binding and peptide bond formation. It has been suggested to have peptidyltransferase activity; this is somewhat controversial. Makes several contacts with the 16S rRNA in the 70S ribosome. In Coxiella burnetii (strain CbuG_Q212) (Coxiella burnetii (strain Q212)), this protein is Large ribosomal subunit protein uL2.